A 383-amino-acid chain; its full sequence is Succinyl-diaminopimelate desuccinylase (383 aa).

His73 is a Zn(2+) binding site. The active site involves Asp75. Asp107 serves as a coordination point for Zn(2+). Residue Glu141 is the Proton acceptor of the active site. Positions 142, 170, and 356 each coordinate Zn(2+).

The protein belongs to the peptidase M20A family. DapE subfamily. As to quaternary structure, homodimer. It depends on Zn(2+) as a cofactor. The cofactor is Co(2+).

The enzyme catalyses N-succinyl-(2S,6S)-2,6-diaminopimelate + H2O = (2S,6S)-2,6-diaminopimelate + succinate. The protein operates within amino-acid biosynthesis; L-lysine biosynthesis via DAP pathway; LL-2,6-diaminopimelate from (S)-tetrahydrodipicolinate (succinylase route): step 3/3. Functionally, catalyzes the hydrolysis of N-succinyl-L,L-diaminopimelic acid (SDAP), forming succinate and LL-2,6-diaminopimelate (DAP), an intermediate involved in the bacterial biosynthesis of lysine and meso-diaminopimelic acid, an essential component of bacterial cell walls. The sequence is that of Succinyl-diaminopimelate desuccinylase from Pseudomonas aeruginosa (strain UCBPP-PA14).